The chain runs to 183 residues: Ribulose bisphosphate carboxylase small subunit, chloroplastic (183 aa).

A chloroplast-targeting transit peptide spans 1-59; that stretch reads MASSMISSGTVATVSADRPAPAQARMVAPFNGLKSSSAFPVTRKSNDITSIASNGGRVQ.

Belongs to the RuBisCO small chain family. In terms of assembly, heterohexadecamer of 8 large and 8 small subunits.

The protein localises to the plastid. It localises to the chloroplast. In terms of biological role, ruBisCO catalyzes two reactions: the carboxylation of D-ribulose 1,5-bisphosphate, the primary event in carbon dioxide fixation, as well as the oxidative fragmentation of the pentose substrate. Both reactions occur simultaneously and in competition at the same active site. Although the small subunit is not catalytic it is essential for maximal activity. The protein is Ribulose bisphosphate carboxylase small subunit, chloroplastic of Pyrus pyrifolia (Chinese pear).